The chain runs to 396 residues: MPTTPSPLALAQGLIRCPSVTPEEGGALAYLAGLLAAAGFSVERPVFSAPGTPDVENLYARIGADGPCLLLAGHTDVVPPGEPALWRHDPFAGVVEGGELHGRGAVDMKGGIACLAAASLAFLAERGPAFGGSIAFLVTGDEEGPAVNGTVKLLAWARARGERFDHCILAEPTNPDALGDMIKIGRRGSLTATLTVLGAQGHVAYPHRAENPIPGLIRLAGALLAAPLDEGTAHFDASNLEFTTIDVGNPASNVIPAQARAVLNIRFNDLWNPASLEAELRRRLDAAAGNAVRYRLDVQPTNAVAFLTQPDAFVDLVTAAIEAETGRRPALSTTGGTSDARFIKEACPVIEFGLVGQTMHQVDERVAVADLDRLAAIFRRILDAYFPASPPPAERA.

His-74 is a Zn(2+) binding site. Asp-76 is an active-site residue. Position 107 (Asp-107) interacts with Zn(2+). Glu-142 acts as the Proton acceptor in catalysis. Residues Glu-143, Glu-171, and His-360 each contribute to the Zn(2+) site.

It belongs to the peptidase M20A family. DapE subfamily. In terms of assembly, homodimer. Zn(2+) is required as a cofactor. The cofactor is Co(2+).

The catalysed reaction is N-succinyl-(2S,6S)-2,6-diaminopimelate + H2O = (2S,6S)-2,6-diaminopimelate + succinate. It participates in amino-acid biosynthesis; L-lysine biosynthesis via DAP pathway; LL-2,6-diaminopimelate from (S)-tetrahydrodipicolinate (succinylase route): step 3/3. Catalyzes the hydrolysis of N-succinyl-L,L-diaminopimelic acid (SDAP), forming succinate and LL-2,6-diaminopimelate (DAP), an intermediate involved in the bacterial biosynthesis of lysine and meso-diaminopimelic acid, an essential component of bacterial cell walls. The protein is Succinyl-diaminopimelate desuccinylase of Methylobacterium sp. (strain 4-46).